A 214-amino-acid polypeptide reads, in one-letter code: Probable GTP-binding protein EngB (214 aa).

The EngB-type G domain maps to 22 to 194 (NLPEIAFAGR…WARIDALLSP (173 aa)). GTP contacts are provided by residues 30–37 (GRSNVGKS), 57–61 (GRTQL), 75–78 (DLPG), 142–145 (TKCD), and 173–175 (FSA). Positions 37 and 59 each coordinate Mg(2+).

It belongs to the TRAFAC class TrmE-Era-EngA-EngB-Septin-like GTPase superfamily. EngB GTPase family. Requires Mg(2+) as cofactor.

Functionally, necessary for normal cell division and for the maintenance of normal septation. The protein is Probable GTP-binding protein EngB of Citrifermentans bemidjiense (strain ATCC BAA-1014 / DSM 16622 / JCM 12645 / Bem) (Geobacter bemidjiensis).